The chain runs to 94 residues: MRTIAILAAILLFALLAQAKSLQETADEAATQEQPGEDDQDLAVSFEENGLSTLRASGSQARRTCRCRFGRCFRRESYSGSCNINGRISSLCCR.

Positions 1–19 are cleaved as a signal peptide; that stretch reads MRTIAILAAILLFALLAQA. Residues 20 to 61 constitute a propeptide that is removed on maturation; sequence KSLQETADEAATQEQPGEDDQDLAVSFEENGLSTLRASGSQA. Cystine bridges form between Cys65–Cys93, Cys67–Cys82, and Cys72–Cys92.

This sequence belongs to the alpha-defensin family.

The protein localises to the secreted. Its function is as follows. Defensins 6 and 7 have bacteriostatic activity against Gram-positive bacteria S.aureus and L.monocytogenes and Gram-negative bacterium E.coli and antifungal activity against C.neoformans. Defensin 7 has microbicidial activity against Gram-positive bacteria S.aureus and L.monocytogenes. The polypeptide is Neutrophil defensin 6 (Macaca mulatta (Rhesus macaque)).